The following is a 429-amino-acid chain: Ribosomal RNA small subunit methyltransferase B (429 aa).

S-adenosyl-L-methionine is bound by residues 254 to 260 (CAAPGGK), D277, D303, and D322. Catalysis depends on C375, which acts as the Nucleophile. Residues 397 to 419 (ALSETGTPDQPGQQNLPGGEEGD) form a disordered region. Polar residues predominate over residues 400-412 (ETGTPDQPGQQNL).

This sequence belongs to the class I-like SAM-binding methyltransferase superfamily. RsmB/NOP family.

It is found in the cytoplasm. The enzyme catalyses cytidine(967) in 16S rRNA + S-adenosyl-L-methionine = 5-methylcytidine(967) in 16S rRNA + S-adenosyl-L-homocysteine + H(+). In terms of biological role, specifically methylates the cytosine at position 967 (m5C967) of 16S rRNA. This is Ribosomal RNA small subunit methyltransferase B from Salmonella paratyphi A (strain ATCC 9150 / SARB42).